Here is a 220-residue protein sequence, read N- to C-terminus: Transcriptional regulatory protein SpaR (220 aa).

One can recognise a Response regulatory domain in the interval 3–115; it reads KILAVDDEKD…ELSARVNAHL (113 aa). D51 is subject to 4-aspartylphosphate. The segment at residues 124–220 is a DNA-binding region (ompR/PhoB-type); the sequence is QSKRVISGFL…TVWGVGYKWE (97 aa).

Post-translationally, phosphorylated by SpaK.

It is found in the cytoplasm. Functionally, member of the two-component regulatory system SpaK/SpaR involved in the regulation of the biosynthesis of lantibiotic subtilin. SpaR may function as a regulatory protein. The sequence is that of Transcriptional regulatory protein SpaR (spaR) from Bacillus subtilis.